The following is a 556-amino-acid chain: Arginine--tRNA ligase (556 aa).

Residues 132–142 (ANPTGSLHLGH) carry the 'HIGH' region motif.

It belongs to the class-I aminoacyl-tRNA synthetase family. As to quaternary structure, monomer.

It localises to the cytoplasm. The catalysed reaction is tRNA(Arg) + L-arginine + ATP = L-arginyl-tRNA(Arg) + AMP + diphosphate. The polypeptide is Arginine--tRNA ligase (Anoxybacillus flavithermus (strain DSM 21510 / WK1)).